The sequence spans 596 residues: Beta-fructofuranosidase, insoluble isoenzyme 7 (596 aa).

An N-terminal signal peptide occupies residues 1 to 24 (MARLGLAVCAASFHLFLLLASTSS). Residues 51–54 (WQND), Gln70, and Trp78 each bind substrate. Residue Asp54 is part of the active site. N-linked (GlcNAc...) asparagine glycosylation is present at Asn82. Substrate-binding positions include 115–116 (WS), 179–180 (RD), and Glu234. N-linked (GlcNAc...) asparagine glycosylation is present at Asn330. Cys432 and Cys478 are disulfide-bonded. N-linked (GlcNAc...) asparagine glycosylation is present at Asn552.

It belongs to the glycosyl hydrolase 32 family.

The protein localises to the secreted. The protein resides in the extracellular space. Its subcellular location is the apoplast. It is found in the cell wall. The enzyme catalyses Hydrolysis of terminal non-reducing beta-D-fructofuranoside residues in beta-D-fructofuranosides.. May play a role in sucrose partitioning during seed development. This Oryza sativa subsp. indica (Rice) protein is Beta-fructofuranosidase, insoluble isoenzyme 7 (CIN7).